The primary structure comprises 179 residues: MTMEKQVPIVTFRTRVRDESISGPNPYRWEDKTTDDYFSGKRVILFSLPGAFTPICSTFQLPDFESLYVEFKKNGIDDIYCLSVNDAFVMNAWGKSQGLKNVKLIPDGSGEFTRKMGMLVAKDNLGFGLRSWRYAAVINNGVVEGWFEEEGFGDNCATDPYGVSSPQNILKCLKAPAFV.

The 151-residue stretch at 2-152 (TMEKQVPIVT…VEGWFEEEGF (151 aa)) folds into the Thioredoxin domain. Cysteine 56 acts as the Cysteine sulfenic acid (-SOH) intermediate (for peroxiredoxin activity) in catalysis.

It belongs to the peroxiredoxin family. Prx5 subfamily. As to quaternary structure, monomer.

It catalyses the reaction a hydroperoxide + 2 glutathione = an alcohol + glutathione disulfide + H2O. In terms of biological role, thiol-specific peroxidase that catalyzes the reduction of hydrogen peroxide and organic hydroperoxides to water and alcohols, respectively. Plays a role in cell protection against oxidative stress by detoxifying peroxides. This Rhizobium etli protein is Peroxiredoxin.